The sequence spans 334 residues: Formamidase (334 aa).

The CN hydrolase domain occupies 14–260; the sequence is MLMGLVQYPV…WEIVTAEVFP (247 aa). E60 functions as the Proton acceptor in the catalytic mechanism. Catalysis depends on K133, which acts as the Proton donor. C166 (nucleophile) is an active-site residue.

The protein belongs to the carbon-nitrogen hydrolase superfamily. Aliphatic amidase family.

The enzyme catalyses formamide + H2O = formate + NH4(+). Functionally, is an aliphatic amidase with a restricted substrate specificity, as it only hydrolyzes formamide. The protein is Formamidase of Nitratidesulfovibrio vulgaris (strain DP4) (Desulfovibrio vulgaris).